The chain runs to 360 residues: Photosystem II protein D1 (360 aa).

A run of 3 helical transmembrane segments spans residues 29 to 46 (YIGW…TATT), 118 to 133 (HFLL…EWEF), and 142 to 156 (WISV…AASA). Residue His118 coordinates chlorophyll a. Trp126 contributes to the pheophytin a binding site. Residues Asp170 and Glu189 each contribute to the [CaMn4O5] cluster site. Residues 197–218 (FHQLGVAGVFGGSLFSAMHGSL) form a helical membrane-spanning segment. His198 provides a ligand contact to chlorophyll a. A quinone is bound by residues His215 and 264–265 (SF). Fe cation is bound at residue His215. Position 272 (His272) interacts with Fe cation. A helical membrane pass occupies residues 274–288 (FLGLWPVVGIWFTAL). Residues His332, Glu333, Asp342, and Ala344 each coordinate [CaMn4O5] cluster. A propeptide spanning residues 345 to 360 (AGESLPVALTAPAVNG) is cleaved from the precursor.

This sequence belongs to the reaction center PufL/M/PsbA/D family. In terms of assembly, PSII is composed of 1 copy each of membrane proteins PsbA, PsbB, PsbC, PsbD, PsbE, PsbF, PsbH, PsbI, PsbJ, PsbK, PsbL, PsbM, PsbT, PsbX, PsbY, PsbZ, Psb30/Ycf12, at least 3 peripheral proteins of the oxygen-evolving complex and a large number of cofactors. It forms dimeric complexes. The D1/D2 heterodimer binds P680, chlorophylls that are the primary electron donor of PSII, and subsequent electron acceptors. It shares a non-heme iron and each subunit binds pheophytin, quinone, additional chlorophylls, carotenoids and lipids. D1 provides most of the ligands for the Mn4-Ca-O5 cluster of the oxygen-evolving complex (OEC). There is also a Cl(-1) ion associated with D1 and D2, which is required for oxygen evolution. The PSII complex binds additional chlorophylls, carotenoids and specific lipids. serves as cofactor. Post-translationally, tyr-161 forms a radical intermediate that is referred to as redox-active TyrZ, YZ or Y-Z. C-terminally processed by CTPA; processing is essential to allow assembly of the oxygen-evolving complex and thus photosynthetic growth.

The protein resides in the plastid. It localises to the chloroplast thylakoid membrane. The enzyme catalyses 2 a plastoquinone + 4 hnu + 2 H2O = 2 a plastoquinol + O2. Functionally, photosystem II (PSII) is a light-driven water:plastoquinone oxidoreductase that uses light energy to abstract electrons from H(2)O, generating O(2) and a proton gradient subsequently used for ATP formation. It consists of a core antenna complex that captures photons, and an electron transfer chain that converts photonic excitation into a charge separation. The D1/D2 (PsbA/PsbD) reaction center heterodimer binds P680, the primary electron donor of PSII as well as several subsequent electron acceptors. This is Photosystem II protein D1 from Rhodomonas salina (Cryptomonas salina).